The following is a 444-amino-acid chain: Chitinase-like protein Idgf4 (444 aa).

An N-terminal signal peptide occupies residues 1–22 (MKLLLILLGALLAVLTIKRTSA). The GH18 domain occupies 27 to 444 (NHLICYYDGT…ILRAIKFKFQ (418 aa)). A disulfide bridge links Cys31 with Cys58. Asn226 is a glycosylation site (N-linked (GlcNAc...) asparagine). A disulfide bridge connects residues Cys345 and Cys428.

It belongs to the glycosyl hydrolase 18 family. IDGF subfamily. Post-translationally, glycosylated.

Its subcellular location is the secreted. Functionally, cooperates with insulin-like peptides to stimulate the proliferation, polarization and motility of imaginal disk cells. May act by stabilizing the binding of insulin-like peptides to its receptor through a simultaneous interaction with both molecules to form a multiprotein signaling complex. This is Chitinase-like protein Idgf4 (Idgf4) from Glossina morsitans morsitans (Savannah tsetse fly).